Here is a 230-residue protein sequence, read N- to C-terminus: MSTIAENIAKVAARIREAAQAAGRDPATVGLLAVSKTKPAAAVREAHAAGLRDFGENYLQEALGKQAELADLPLNWHFIGPIQSNKTRPIAEHFQWVHSVDRLKIAQRLSEQRPAGLPPLNVCLQVNVSGEASKSGCAPEDLPALAEAVKQLPNLRLRGLMAIPEPTAERAAQHAAFARLRELLLDLNLGLDTLSMGMSDDLEAAIGEGATWVRIGTALFGARDYGAPAS.

K36 bears the N6-(pyridoxal phosphate)lysine mark.

It belongs to the pyridoxal phosphate-binding protein YggS/PROSC family.

Its function is as follows. Perhaps involved in proline biosynthesis. Pyridoxal 5'-phosphate (PLP)-binding protein, which is involved in PLP homeostasis. This chain is Pyridoxal phosphate homeostasis protein, found in Pseudomonas aeruginosa (strain ATCC 15692 / DSM 22644 / CIP 104116 / JCM 14847 / LMG 12228 / 1C / PRS 101 / PAO1).